Reading from the N-terminus, the 122-residue chain is Ribosome-binding factor A (122 aa).

This sequence belongs to the RbfA family. As to quaternary structure, monomer. Binds 30S ribosomal subunits, but not 50S ribosomal subunits or 70S ribosomes.

The protein resides in the cytoplasm. One of several proteins that assist in the late maturation steps of the functional core of the 30S ribosomal subunit. Associates with free 30S ribosomal subunits (but not with 30S subunits that are part of 70S ribosomes or polysomes). Required for efficient processing of 16S rRNA. May interact with the 5'-terminal helix region of 16S rRNA. This chain is Ribosome-binding factor A, found in Pelobacter propionicus (strain DSM 2379 / NBRC 103807 / OttBd1).